The chain runs to 175 residues: Coagulogen (175 aa).

Cystine bridges form between Cys-8–Cys-167, Cys-10–Cys-95, Cys-60–Cys-161, Cys-65–Cys-121, Cys-75–Cys-168, Cys-88–Cys-140, Cys-127–Cys-170, and Cys-134–Cys-172.

It belongs to the coagulin family. As to quaternary structure, coagulogen is cleaved after Arg-18 and Arg-46 by a clotting enzyme contained in the hemocyte and activated by a bacterial endotoxin (lipopolysaccharide). This cleavage releases the peptide C and leaves 2 chains of coagulin, A and B, linked by two disulfide bonds. Coagulin molecules interlink to form a gel. Hemolymph.

The protein resides in the secreted. Its function is as follows. Coagulogen is a gel-forming protein of hemolymph; it hinders the spread of invaders by immobilizing them. The chain is Coagulogen from Tachypleus gigas (Southeast Asian horseshoe crab).